The primary structure comprises 609 residues: UvrABC system protein C (609 aa).

The region spanning 15–92 (TGSGVYQMQD…IKQFRPRYNV (78 aa)) is the GIY-YIG domain. In terms of domain architecture, UVR spans 202 to 237 (DQVIIKLTERMEVASENLVFEEAAHYRDQIRQLRRL).

This sequence belongs to the UvrC family. Interacts with UvrB in an incision complex.

It localises to the cytoplasm. In terms of biological role, the UvrABC repair system catalyzes the recognition and processing of DNA lesions. UvrC both incises the 5' and 3' sides of the lesion. The N-terminal half is responsible for the 3' incision and the C-terminal half is responsible for the 5' incision. In Coxiella burnetii (strain RSA 331 / Henzerling II), this protein is UvrABC system protein C.